A 498-amino-acid chain; its full sequence is Tyrosine 3-monooxygenase (498 aa).

Polar residues predominate over residues 1-10 (MPTPSASSPQ). The interval 1 to 33 (MPTPSASSPQPKGFRRAVSEQDTKQAEAVTSPR) is disordered. Ser-19 and Ser-31 each carry phosphoserine. The residue at position 40 (Ser-40) is a Phosphoserine; by CaMK2 and PKA. Residues His-331, His-336, and Glu-376 each coordinate Fe cation. A Phosphoserine modification is found at Ser-472.

It belongs to the biopterin-dependent aromatic amino acid hydroxylase family. Homotetramer. Interacts (when phosphorylated at Ser-19) with YWHAG; one YWHAG dimer bounds to one TH tetramer and this interaction may influence the phosphorylation and dephosphorylation of other sites. Interacts with NT5DC2; the interaction results in reduced phosphorylation and decreased catalytic activity of TH. Fe(2+) serves as cofactor. Phosphorylated on Ser-19, Ser-31 and Ser-40 by several protein kinases with different site specificities. Phosphorylation at Ser-31 and Ser-40 leads to an increase of TH activity. Phosphorylation at Ser-40 activates the enzyme and also counteracts the feedback inhibition of TH by catecholamines. Phosphorylation of Ser-19 and Ser-31 triggers the proteasomal degradation of TH through the ubiquitin-proteasome pathway. Phosphorylation at Ser-31 facilitates transport of TH from the soma to the nerve terminals via the microtubule network. Phosphorylation at Ser-19 induces the high-affinity binding to the 14-3-3 protein YWHAG; this interaction may influence the phosphorylation and dephosphorylation of other sites. Ser-19 increases the phosphorylation at Ser-40 in a hierarchical manner, leading to increased activity. Expressed in the adrenal gland. Expressed in the retina. Expressed in the in the striatum (at protein level).

It localises to the cytoplasm. The protein resides in the perinuclear region. It is found in the nucleus. Its subcellular location is the cell projection. The protein localises to the axon. It localises to the cytoplasmic vesicle. The protein resides in the secretory vesicle. It is found in the synaptic vesicle. The enzyme catalyses (6R)-L-erythro-5,6,7,8-tetrahydrobiopterin + L-tyrosine + O2 = (4aS,6R)-4a-hydroxy-L-erythro-5,6,7,8-tetrahydrobiopterin + L-dopa. The protein operates within catecholamine biosynthesis; dopamine biosynthesis; dopamine from L-tyrosine: step 1/2. With respect to regulation, inhibited in feedback fashion by the catecholamine neurotransmitters, especially by dopamine in competition with tetrahydrobiopterin. Phosphorylation of several Ser/Thr residues in the N-terminus regulates the catalytic activity. Ser-31 and Ser-40 are readily phosphorylated to activate the catalytic activity. A Cysteine modification induced by N-ethylmaleimide (NEM), inhibits tyrosine 3-monooxygenase activity through the modification of the Cys-177. Its function is as follows. Catalyzes the conversion of L-tyrosine to L-dihydroxyphenylalanine (L-Dopa), the rate-limiting step in the biosynthesis of catecholamines, dopamine, noradrenaline, and adrenaline. Uses tetrahydrobiopterin and molecular oxygen to convert tyrosine to L-Dopa. In addition to tyrosine, is able to catalyze the hydroxylation of phenylalanine and tryptophan with lower specificity. Positively regulates the regression of retinal hyaloid vessels during postnatal development. The protein is Tyrosine 3-monooxygenase (Th) of Mus musculus (Mouse).